A 155-amino-acid chain; its full sequence is D-aminoacyl-tRNA deacylase (155 aa).

The Gly-cisPro motif, important for rejection of L-amino acids motif lies at 137–138; the sequence is GP.

It belongs to the DTD family. In terms of assembly, homodimer.

The protein resides in the cytoplasm. The catalysed reaction is glycyl-tRNA(Ala) + H2O = tRNA(Ala) + glycine + H(+). It carries out the reaction a D-aminoacyl-tRNA + H2O = a tRNA + a D-alpha-amino acid + H(+). Its function is as follows. An aminoacyl-tRNA editing enzyme that deacylates mischarged D-aminoacyl-tRNAs. Also deacylates mischarged glycyl-tRNA(Ala), protecting cells against glycine mischarging by AlaRS. Acts via tRNA-based rather than protein-based catalysis; rejects L-amino acids rather than detecting D-amino acids in the active site. By recycling D-aminoacyl-tRNA to D-amino acids and free tRNA molecules, this enzyme counteracts the toxicity associated with the formation of D-aminoacyl-tRNA entities in vivo and helps enforce protein L-homochirality. This chain is D-aminoacyl-tRNA deacylase, found in Roseiflexus sp. (strain RS-1).